Here is a 174-residue protein sequence, read N- to C-terminus: Large ribosomal subunit protein uL10 (174 aa).

Belongs to the universal ribosomal protein uL10 family. Part of the ribosomal stalk of the 50S ribosomal subunit. The N-terminus interacts with L11 and the large rRNA to form the base of the stalk. The C-terminus forms an elongated spine to which L12 dimers bind in a sequential fashion forming a multimeric L10(L12)X complex.

Its function is as follows. Forms part of the ribosomal stalk, playing a central role in the interaction of the ribosome with GTP-bound translation factors. This Anaeromyxobacter sp. (strain Fw109-5) protein is Large ribosomal subunit protein uL10.